Here is a 92-residue protein sequence, read N- to C-terminus: Small ribosomal subunit protein uS19 (92 aa).

This sequence belongs to the universal ribosomal protein uS19 family.

In terms of biological role, protein S19 forms a complex with S13 that binds strongly to the 16S ribosomal RNA. This is Small ribosomal subunit protein uS19 from Shewanella halifaxensis (strain HAW-EB4).